Here is a 457-residue protein sequence, read N- to C-terminus: Reticulon-like protein B18 (457 aa).

Residues 94–183 (AAVTARRSKT…SPSSDQPQDV (90 aa)) form a disordered region. Over residues 124–136 (LRSEAMVDTKENT) the composition is skewed to basic and acidic residues. A compositionally biased stretch (basic residues) spans 149–163 (NQRKQKKLGRSKKEK). Residues 166 to 183 (SVPLLASPSPSSDQPQDV) are compositionally biased toward low complexity. One can recognise a Reticulon domain in the interval 195–385 (ISDLIMWRDV…AFWNLTSLKT (191 aa)). Transmembrane regions (helical) follow at residues 208 to 228 (TLWFGFGCICFLSTCFAAKGF), 230 to 250 (FSVFSAISYLGLLFLGVSFLS), 314 to 334 (YGYLITLWRLCAFGFFLSFTI), and 377 to 397 (FWNLTSLKTRFIAVFIIVVVI). Residues 407-457 (DSEDEEEKKQQEKTHPEQQKSPEDKSTSPRSAEEEQALVLVAETKAPKKLY) form a disordered region. A compositionally biased stretch (basic and acidic residues) spans 413-439 (EKKQQEKTHPEQQKSPEDKSTSPRSAE).

It localises to the endoplasmic reticulum membrane. The protein is Reticulon-like protein B18 (RTNLB18) of Arabidopsis thaliana (Mouse-ear cress).